We begin with the raw amino-acid sequence, 141 residues long: MLMPKRTKYRKQMKGRNRGKSFRGANLAFGDIGIKAIEHGRIDSRQIESARIAMTRHIKRAGKVWIRVFPDKPLTAKPLETRMGKGKGGVEKWVMNIKPGRLIYEMAGIDEALAREALALAQSKLPFKTKIITSESENEIY.

The disordered stretch occupies residues 1–20; the sequence is MLMPKRTKYRKQMKGRNRGK.

Belongs to the universal ribosomal protein uL16 family. As to quaternary structure, part of the 50S ribosomal subunit.

In terms of biological role, binds 23S rRNA and is also seen to make contacts with the A and possibly P site tRNAs. The protein is Large ribosomal subunit protein uL16 of Helicobacter hepaticus (strain ATCC 51449 / 3B1).